Here is a 474-residue protein sequence, read N- to C-terminus: MANKNVGTITQVLGAVVDVRFDGQLPAILSALHLEHQGKKLVLEVAQHLGESTVRTIAMDSTDGLTRGTEVVDTGAAIQMPVGPETLGRIINVIGEPIDERGPIGNKTTLPIHADAPEFVDQSTETEILVTGIKVIDLLAPYCKGGKIGLCGGAGVGKTVLIMELINNIAKAHGGYSVFAGVGERTREGNDLYHEMIESGVIKLDGPGSKVALVYGQMNEPPGARARVALSGLTVAEYFRDVEGQDVLFFVDNIFRFTQAGSEVSALLGRIPSAVGYQPTLATDMGALQERITSTKKGSITSVQAIYVPADDLTDPAPATSFAHLDATTVLNRQIAELGIYPAVDPLDSTSRVLDPRVVGNDHYQTARDVQRILQTYKSLQDIIAILGMDELSEEDKLVVSRARKIQRFLSQPFHVAEIFTGSPGKLVAIDDTIKGFKAIVAGEYDHLPEAAFYMVGGIDEVIEKAKKMAAEAA.

152–159 (GGAGVGKT) contributes to the ATP binding site.

Belongs to the ATPase alpha/beta chains family. As to quaternary structure, F-type ATPases have 2 components, CF(1) - the catalytic core - and CF(0) - the membrane proton channel. CF(1) has five subunits: alpha(3), beta(3), gamma(1), delta(1), epsilon(1). CF(0) has three main subunits: a(1), b(2) and c(9-12). The alpha and beta chains form an alternating ring which encloses part of the gamma chain. CF(1) is attached to CF(0) by a central stalk formed by the gamma and epsilon chains, while a peripheral stalk is formed by the delta and b chains.

It is found in the cell inner membrane. The catalysed reaction is ATP + H2O + 4 H(+)(in) = ADP + phosphate + 5 H(+)(out). Functionally, produces ATP from ADP in the presence of a proton gradient across the membrane. The catalytic sites are hosted primarily by the beta subunits. The chain is ATP synthase subunit beta from Paramagnetospirillum magneticum (strain ATCC 700264 / AMB-1) (Magnetospirillum magneticum).